The primary structure comprises 977 residues: RNA-binding protein 15 (977 aa).

4 stretches are compositionally biased toward basic and acidic residues: residues 1-10 (MRTAGRDPVP), 35-52 (RGDD…ERSP), 59-72 (RGGE…ERSK), and 98-113 (LHLD…REYD). The interval 1–167 (MRTAGRDPVP…SSAPGGGDGA (167 aa)) is disordered. Ser109 bears the Phosphoserine mark. Over residues 119–130 (SSSRLHSYSSPS) the composition is skewed to low complexity. The segment covering 135–150 (SGGGESRSSSRGGGGE) has biased composition (gly residues). Positions 151–160 (SRSSGAASSA) are enriched in low complexity. The RRM 1 domain occupies 170–252 (KTLKISELGS…RPLKIEAVYV (83 aa)). 3 positions are modified to phosphoserine: Ser179, Ser208, and Ser210. Residue Lys246 forms a Glycyl lysine isopeptide (Lys-Gly) (interchain with G-Cter in SUMO2) linkage. Phosphoserine is present on residues Ser253, Ser257, and Ser259. Residues 256–298 (RSRSPLDKDTYPPSASVVGASVGGHRHPPGGGGGQRSLSPGGA) form a disordered region. A Phosphotyrosine modification is found at Tyr266. Ser292, Ser294, and Ser365 each carry phosphoserine. 2 consecutive RRM domains span residues 374–451 (RTLF…YGKA) and 455–529 (TRLW…FADT). Glycyl lysine isopeptide (Lys-Gly) (interchain with G-Cter in SUMO2) cross-links involve residues Lys406, Lys420, and Lys445. Position 450 is an N6-acetyllysine (Lys450). 2 stretches are compositionally biased toward basic and acidic residues: residues 555–581 (HRAP…RDLY) and 613–661 (SLDR…ESDR). Residues 555-778 (HRAPDPLRGA…KQDGGTAPVA (224 aa)) are disordered. Phosphothreonine is present on Thr568. The residue at position 578 (Arg578) is an Asymmetric dimethylarginine; alternate; by PRMT1. Residue Arg578 is modified to Omega-N-methylarginine; alternate; by PRMT1. 6 positions are modified to phosphoserine: Ser622, Ser656, Ser670, Ser674, Ser700, and Ser741. Composition is skewed to basic and acidic residues over residues 673–728 (RSPE…AERD) and 741–750 (SPLKKEDRSD). Lys744 participates in a covalent cross-link: Glycyl lysine isopeptide (Lys-Gly) (interchain with G-Cter in SUMO2). Polar residues predominate over residues 752–771 (SAPSTSTASSKLKSPSQKQD). Phosphoserine occurs at positions 765, 767, and 781. The SPOC domain occupies 777–956 (VASASPKLCL…YLVMIIVRGF (180 aa)). A disordered region spans residues 865–884 (GSSDSRSSSSSAASDTATST). Residues 866 to 884 (SSDSRSSSSSAASDTATST) show a composition bias toward low complexity. Phosphoserine is present on Ser935.

This sequence belongs to the RRM Spen family. In terms of assembly, component of the WMM complex, a N6-methyltransferase complex composed of a catalytic subcomplex, named MAC, and of an associated subcomplex, named MACOM. The MAC subcomplex is composed of METTL3 and METTL14. The MACOM subcomplex is composed of WTAP, ZC3H13, CBLL1/HAKAI, VIRMA, and, in some cases of RBM15 (RBM15 or RBM15B). Also a component of a MACOM-like complex, named WTAP complex, composed of WTAP, ZC3H13, CBLL1, VIRMA, RBM15, BCLAF1 and THRAP3. Interacts with RBPJ. Interacts (via SPOC domain) with SETD1B. Interacts with NXF1, the interaction is required to promote mRNA export. Interacts with SF3B1. (Microbial infection) Interacts with Epstein-Barr virus BSFL2/BMLF1. Methylated at Arg-578 by PRMT1, leading to promote ubiquitination by CNOT4 and subsequent degradation by the proteasome. In terms of processing, ubiquitinated by CNOT4 following methylation at Arg-578 by PRMT1.

The protein resides in the nucleus speckle. Its subcellular location is the nucleus. It is found in the nucleoplasm. The protein localises to the nucleus envelope. It localises to the nucleus membrane. Functionally, RNA-binding protein that acts as a key regulator of N6-methyladenosine (m6A) methylation of RNAs, thereby regulating different processes, such as hematopoietic cell homeostasis, alternative splicing of mRNAs and X chromosome inactivation mediated by Xist RNA. Associated component of the WMM complex, a complex that mediates N6-methyladenosine (m6A) methylation of RNAs, a modification that plays a role in the efficiency of mRNA splicing and RNA processing. Plays a key role in m6A methylation, possibly by binding target RNAs and recruiting the WMM complex. Involved in random X inactivation mediated by Xist RNA: acts by binding Xist RNA and recruiting the WMM complex, which mediates m6A methylation, leading to target YTHDC1 reader on Xist RNA and promoting transcription repression activity of Xist. Required for the development of multiple tissues, such as the maintenance of the homeostasis of long-term hematopoietic stem cells and for megakaryocyte (MK) and B-cell differentiation. Regulates megakaryocyte differentiation by regulating alternative splicing of genes important for megakaryocyte differentiation; probably regulates alternative splicing via m6A regulation. Required for placental vascular branching morphogenesis and embryonic development of the heart and spleen. Acts as a regulator of thrombopoietin response in hematopoietic stem cells by regulating alternative splicing of MPL. May also function as an mRNA export factor, stimulating export and expression of RTE-containing mRNAs which are present in many retrotransposons that require to be exported prior to splicing. High affinity binding of pre-mRNA to RBM15 may allow targeting of the mRNP to the export helicase DBP5 in a manner that is independent of splicing-mediated NXF1 deposition, resulting in export prior to splicing. May be implicated in HOX gene regulation. The protein is RNA-binding protein 15 of Homo sapiens (Human).